The sequence spans 383 residues: Processive diacylglycerol beta-glucosyltransferase (383 aa).

The protein belongs to the glycosyltransferase 28 family. UgtP subfamily.

The protein resides in the cell membrane. It carries out the reaction a 1,2-diacyl-3-O-(beta-D-glucopyranosyl)-sn-glycerol + UDP-alpha-D-glucose = a 1,2-diacyl-3-O-(beta-D-Glc-(1-&gt;6)-beta-D-Glc)-sn-glycerol + UDP + H(+). The catalysed reaction is a 1,2-diacyl-3-O-(beta-D-Glc-(1-&gt;6)-beta-D-Glc)-sn-glycerol + UDP-alpha-D-glucose = a 1,2-diacyl-3-O-(beta-D-Glc-(1-&gt;6)-beta-D-Glc-(1-&gt;6)-beta-D-Glc)-sn-glycerol + UDP + H(+). The enzyme catalyses a 1,2-diacyl-sn-glycerol + UDP-alpha-D-glucose = a 1,2-diacyl-3-O-(beta-D-glucopyranosyl)-sn-glycerol + UDP + H(+). It functions in the pathway glycolipid metabolism; diglucosyl-diacylglycerol biosynthesis. In terms of biological role, processive glucosyltransferase involved in the biosynthesis of both the bilayer- and non-bilayer-forming membrane glucolipids. Is able to successively transfer up to three glucosyl residues to diacylglycerol (DAG), thereby catalyzing the formation of beta-monoglucosyl-DAG (3-O-(beta-D-glucopyranosyl)-1,2-diacyl-sn-glycerol), beta-diglucosyl-DAG (3-O-(beta-D-glucopyranosyl-beta-(1-&gt;6)-D-glucopyranosyl)-1,2-diacyl-sn-glycerol) and beta-triglucosyl-DAG (3-O-(beta-D-glucopyranosyl-beta-(1-&gt;6)-D-glucopyranosyl-beta-(1-&gt;6)-D-glucopyranosyl)-1,2-diacyl-sn-glycerol). Beta-diglucosyl-DAG is the predominant glycolipid found in Bacillales and is also used as a membrane anchor for lipoteichoic acid (LTA). The chain is Processive diacylglycerol beta-glucosyltransferase from Bacillus licheniformis (strain ATCC 14580 / DSM 13 / JCM 2505 / CCUG 7422 / NBRC 12200 / NCIMB 9375 / NCTC 10341 / NRRL NRS-1264 / Gibson 46).